Consider the following 583-residue polypeptide: MNIFRFFEGRVEAALRSLEEEGVLPSGLDLTRVAVEPPRDPSHGDLSTNAAMVLAKPAGMKPRELAEQLAVKLGGEEAVTEVDVAGPGFINLRLNPAFWQARIPEILRSGPAYGASDVGAGEAVNVEYVSANPTGPMHVGHVRGAVFGDALCNLLEKVGYRVCREYYINDAGGQIEVLARSAFLRYREALGEDIGQIPEGLYPGGYLKPVGQALVAAHGRSLLEKDEPEALSIVREAAVEAMMELIRGDLGVLGIVHETFFSELALHRSGFVEQTLKVLEDKGLIYIGELEPPKGEVPDDWEARPQTLFRSTEFGDDTDRALKKSDGSWTYFAPDIAYHLDKYNRGYRTLIDVWGADHSGYIKRMRAAIAGVTDGNAEFDVKICQLVRLFRNGEPVKMSKRSGDFVTLREVVDEVGKDVVRFMMLTRKNDAPLDFDFAKVMEQSRDNPVFYVQYANARIHSVLRNVAEEGTYDLSDGALANADFTLLTDEAEMALVRLMAGFPRLVEQAALAHEPHRIAFYLDDLAAAFHGLWNKGKDDHSLRFIRADHRDVTLARLALIRSAAYVIAAGLAILGVEPTEEMR.

The 'HIGH' region signature appears at 131–141 (ANPTGPMHVGH).

This sequence belongs to the class-I aminoacyl-tRNA synthetase family. In terms of assembly, monomer.

Its subcellular location is the cytoplasm. It catalyses the reaction tRNA(Arg) + L-arginine + ATP = L-arginyl-tRNA(Arg) + AMP + diphosphate. The polypeptide is Arginine--tRNA ligase (Parvibaculum lavamentivorans (strain DS-1 / DSM 13023 / NCIMB 13966)).